The following is a 546-amino-acid chain: Chaperonin GroEL (546 aa).

ATP contacts are provided by residues 30-33 (TLGP), K51, 87-91 (DGTTT), G415, and D497. The interval 527–546 (PKKDSPAPAMPGGGMGGMDF) is disordered. The segment covering 537 to 546 (PGGGMGGMDF) has biased composition (gly residues).

Belongs to the chaperonin (HSP60) family. As to quaternary structure, forms a cylinder of 14 subunits composed of two heptameric rings stacked back-to-back. Interacts with the co-chaperonin GroES.

It is found in the cytoplasm. It catalyses the reaction ATP + H2O + a folded polypeptide = ADP + phosphate + an unfolded polypeptide.. Functionally, together with its co-chaperonin GroES, plays an essential role in assisting protein folding. The GroEL-GroES system forms a nano-cage that allows encapsulation of the non-native substrate proteins and provides a physical environment optimized to promote and accelerate protein folding. The protein is Chaperonin GroEL of Methylorubrum populi (strain ATCC BAA-705 / NCIMB 13946 / BJ001) (Methylobacterium populi).